Consider the following 198-residue polypeptide: Thymidine kinase (198 aa).

ATP is bound by residues G16–S23 and E89–Q92. The active-site Proton acceptor is the E90. Residues C146, C149, C184, and C187 each coordinate Zn(2+).

The protein belongs to the thymidine kinase family. As to quaternary structure, homotetramer.

The protein resides in the cytoplasm. The catalysed reaction is thymidine + ATP = dTMP + ADP + H(+). In Dictyoglomus thermophilum (strain ATCC 35947 / DSM 3960 / H-6-12), this protein is Thymidine kinase.